The primary structure comprises 245 residues: Chlorophyll a-b binding protein 1B-21, chloroplastic (245 aa).

The N-terminal 44 residues, 1–44 (MASSSGLRSCSAVGVPSLLAPSSRSGRSGLPFCAYATTSGRVTM), are a transit peptide targeting the chloroplast. Trp48 lines the chlorophyll b pocket. Phe68, Glu87, and His90 together coordinate chlorophyll a. Arg92 contributes to the chlorophyll b binding site. A helical transmembrane segment spans residues 93-113 (WAMLCVPGVLVPEALGLGNWV). Leu129 is a binding site for chlorophyll a. Residues 132-152 (PVPWGNLPTILAIEFLAIAFA) form a helical membrane-spanning segment. Chlorophyll b-binding residues include Val133, Glu153, and Arg156. The chlorophyll a site is built by Lys190, Glu191, Asn194, Arg196, Gln208, and His224.

This sequence belongs to the light-harvesting chlorophyll a/b-binding (LHC) protein family. The LHC complex consists of chlorophyll a-b binding proteins. It depends on Binds at least 14 chlorophylls (8 Chl-a and 6 Chl-b) and carotenoids such as lutein and neoxanthin. as a cofactor. Post-translationally, photoregulated by reversible phosphorylation of its threonine residues.

Its subcellular location is the plastid. The protein resides in the chloroplast thylakoid membrane. In terms of biological role, the light-harvesting complex (LHC) functions as a light receptor, it captures and delivers excitation energy to photosystems with which it is closely associated. The protein is Chlorophyll a-b binding protein 1B-21, chloroplastic (LHC Ib-21) of Hordeum vulgare (Barley).